The sequence spans 260 residues: Potassium inward rectifier (Kir)-like channel 3 (260 aa).

The tract at residues 1–34 is disordered; that stretch reads MPMTPSEFKNRLLFGSLPRSSSDPTDLQFTEPNV. Over 1 to 68 the chain is Cytoplasmic; sequence MPMTPSEFKN…EQSVSKSIAR (68 aa). Residues 18–31 are compositionally biased toward polar residues; sequence PRSSSDPTDLQFTE. The helical transmembrane segment at 69-89 threads the bilayer; that stretch reads QALALLVVYLSLGVLIYWLTL. Positions 127–146 form an intramembrane region, pore-forming; the sequence is DSFCFSVMMVTTVGFGDRAF. Residues 153 to 173 traverse the membrane as a helical segment; it reads FLAAVWLLVSTLAVARAFLFL. Over 174–260 the chain is Cytoplasmic; it reads ADARADKRNR…LVDLTTATSV (87 aa). EF-hand domains follow at residues 190-225 and 229-256; these read LGES…QMEK and EDFI…DLTT. Asp203, Asp205, Asp207, Arg209, Glu214, Asp242, Ser246, Arg248, and Asp253 together coordinate Ca(2+).

This sequence belongs to the two pore domain potassium channel (TC 1.A.1.7) family. In terms of assembly, homotetramer. As to expression, expressed in hydathodes and the vascular tissues of roots, stems, leaves and flowers.

It is found in the vacuole membrane. Its function is as follows. Probable calcium-activated potassium channel. The polypeptide is Potassium inward rectifier (Kir)-like channel 3 (KCO3) (Arabidopsis thaliana (Mouse-ear cress)).